Consider the following 258-residue polypeptide: Leucyl/phenylalanyl-tRNA--protein transferase (258 aa).

Positions 199 to 220 (GGSDGPAPDQSIGMSSSGGVSD) are disordered. A compositionally biased stretch (low complexity) spans 209-220 (SIGMSSSGGVSD).

This sequence belongs to the L/F-transferase family.

The protein localises to the cytoplasm. The catalysed reaction is N-terminal L-lysyl-[protein] + L-leucyl-tRNA(Leu) = N-terminal L-leucyl-L-lysyl-[protein] + tRNA(Leu) + H(+). It catalyses the reaction N-terminal L-arginyl-[protein] + L-leucyl-tRNA(Leu) = N-terminal L-leucyl-L-arginyl-[protein] + tRNA(Leu) + H(+). It carries out the reaction L-phenylalanyl-tRNA(Phe) + an N-terminal L-alpha-aminoacyl-[protein] = an N-terminal L-phenylalanyl-L-alpha-aminoacyl-[protein] + tRNA(Phe). Functions in the N-end rule pathway of protein degradation where it conjugates Leu, Phe and, less efficiently, Met from aminoacyl-tRNAs to the N-termini of proteins containing an N-terminal arginine or lysine. This chain is Leucyl/phenylalanyl-tRNA--protein transferase, found in Hyphomonas neptunium (strain ATCC 15444).